A 472-amino-acid polypeptide reads, in one-letter code: Alanine--anticapsin ligase (472 aa).

E109 provides a ligand contact to Mg(2+). The ATP site is built by K138 and K178. The region spanning 142 to 355 (RAAFNRAGVK…MAQLLLDVLC (214 aa)) is the ATP-grasp domain. Residue L182 participates in Mg(2+) binding. ATP is bound by residues 184–185 (SS), 226–229 (EEFL), and Q268. Residues E273 and 309–311 (HTE) each bind substrate. The Mg(2+) site is built by E311 and E324. Residue 328–331 (RFAG) participates in substrate binding.

As to quaternary structure, monomer or homodimer. Mg(2+) serves as cofactor.

The catalysed reaction is L-anticapsin + L-alanine + ATP = bacilysin + ADP + phosphate + H(+). It functions in the pathway antibiotic biosynthesis; bacilysin biosynthesis. In terms of biological role, part of the bacABCDEFG operon responsible for the biosynthesis of bacilysin, an irreversible inactivator of the glutaminase domain of glucosamine synthetase. Catalyzes the formation of alpha-dipeptides from various L-amino acids in the presence of ATP. In vivo catalyzes the ligation of L-alanine and L-anticapsin (epoxycyclohexanonyl-Ala) to produce the final bacilysin antibiotic (L-Ala-L-4S-cyclohexenonyl-Ala dipeptide). This Bacillus subtilis protein is Alanine--anticapsin ligase.